We begin with the raw amino-acid sequence, 313 residues long: D-alanine--D-alanine ligase (313 aa).

The 201-residue stretch at 104–304 (KQALVPHGIP…YSDLVEAIIA (201 aa)) folds into the ATP-grasp domain. Residue 130-187 (PLPRPYVLKPVNEGSSVGVAIVTAEGNYGSPISAASKGPWQEFDQLLAEPFIRGRELT) participates in ATP binding. Mg(2+) contacts are provided by Asp255, Glu271, and Asn273.

Belongs to the D-alanine--D-alanine ligase family. Mg(2+) is required as a cofactor. The cofactor is Mn(2+).

Its subcellular location is the cytoplasm. It catalyses the reaction 2 D-alanine + ATP = D-alanyl-D-alanine + ADP + phosphate + H(+). The protein operates within cell wall biogenesis; peptidoglycan biosynthesis. Its function is as follows. Cell wall formation. The polypeptide is D-alanine--D-alanine ligase (Novosphingobium aromaticivorans (strain ATCC 700278 / DSM 12444 / CCUG 56034 / CIP 105152 / NBRC 16084 / F199)).